Reading from the N-terminus, the 139-residue chain is UPF0216 protein MJ1224 (139 aa).

This sequence belongs to the UPF0216 family.

The protein is UPF0216 protein MJ1224 of Methanocaldococcus jannaschii (strain ATCC 43067 / DSM 2661 / JAL-1 / JCM 10045 / NBRC 100440) (Methanococcus jannaschii).